We begin with the raw amino-acid sequence, 282 residues long: Bifunctional protein FolD (282 aa).

NADP(+)-binding positions include 164–166 (GAS), I189, and I230.

The protein belongs to the tetrahydrofolate dehydrogenase/cyclohydrolase family. Homodimer.

The catalysed reaction is (6R)-5,10-methylene-5,6,7,8-tetrahydrofolate + NADP(+) = (6R)-5,10-methenyltetrahydrofolate + NADPH. It carries out the reaction (6R)-5,10-methenyltetrahydrofolate + H2O = (6R)-10-formyltetrahydrofolate + H(+). The protein operates within one-carbon metabolism; tetrahydrofolate interconversion. Catalyzes the oxidation of 5,10-methylenetetrahydrofolate to 5,10-methenyltetrahydrofolate and then the hydrolysis of 5,10-methenyltetrahydrofolate to 10-formyltetrahydrofolate. This chain is Bifunctional protein FolD, found in Campylobacter jejuni (strain RM1221).